We begin with the raw amino-acid sequence, 717 residues long: Ribosomal RNA large subunit methyltransferase K/L (717 aa).

Positions 44 to 155 (DAYKVCIYSY…KQFVNVFLCL (112 aa)) constitute a THUMP domain.

It belongs to the methyltransferase superfamily. RlmKL family.

The protein localises to the cytoplasm. It carries out the reaction guanosine(2445) in 23S rRNA + S-adenosyl-L-methionine = N(2)-methylguanosine(2445) in 23S rRNA + S-adenosyl-L-homocysteine + H(+). It catalyses the reaction guanosine(2069) in 23S rRNA + S-adenosyl-L-methionine = N(2)-methylguanosine(2069) in 23S rRNA + S-adenosyl-L-homocysteine + H(+). Functionally, specifically methylates the guanine in position 2445 (m2G2445) and the guanine in position 2069 (m7G2069) of 23S rRNA. The polypeptide is Ribosomal RNA large subunit methyltransferase K/L (Francisella tularensis subsp. tularensis (strain WY96-3418)).